We begin with the raw amino-acid sequence, 309 residues long: Tagatose-6-phosphate kinase (309 aa).

The protein belongs to the carbohydrate kinase PfkB family. LacC subfamily.

It carries out the reaction D-tagatofuranose 6-phosphate + ATP = D-tagatofuranose 1,6-bisphosphate + ADP + H(+). Its pathway is carbohydrate metabolism; D-tagatose 6-phosphate degradation; D-glyceraldehyde 3-phosphate and glycerone phosphate from D-tagatose 6-phosphate: step 1/2. This chain is Tagatose-6-phosphate kinase, found in Streptococcus pyogenes serotype M1.